The primary structure comprises 268 residues: MADS-box protein FBP24 (268 aa).

Positions 4–64 (MGRGKIEVKR…GKLFEYCSQP (61 aa)) constitute an MADS-box domain. The 91-residue stretch at 88-178 (RVQLYDEVAK…YQWLMNNQMY (91 aa)) folds into the K-box domain. The tract at residues 243-268 (NSISPYRLQPSHPNLQDSHVHGPSYD) is disordered.

The protein localises to the nucleus. Its function is as follows. Probable transcription factor. This Petunia hybrida (Petunia) protein is MADS-box protein FBP24 (FBP24).